A 417-amino-acid chain; its full sequence is Diaminopimelate decarboxylase (417 aa).

Lys61 is subject to N6-(pyridoxal phosphate)lysine. Residues Gly240 and 275–278 (EPGR) each bind pyridoxal 5'-phosphate. Residues Arg278, Arg314, and Tyr318 each contribute to the substrate site. Cys344 (proton donor) is an active-site residue. Glu345 and Tyr372 together coordinate substrate. Residue Tyr372 coordinates pyridoxal 5'-phosphate.

Belongs to the Orn/Lys/Arg decarboxylase class-II family. LysA subfamily. As to quaternary structure, homodimer. Pyridoxal 5'-phosphate is required as a cofactor.

It catalyses the reaction meso-2,6-diaminopimelate + H(+) = L-lysine + CO2. It functions in the pathway amino-acid biosynthesis; L-lysine biosynthesis via DAP pathway; L-lysine from DL-2,6-diaminopimelate: step 1/1. Functionally, specifically catalyzes the decarboxylation of meso-diaminopimelate (meso-DAP) to L-lysine. The polypeptide is Diaminopimelate decarboxylase (lysA) (Vibrio cholerae serotype O1 (strain ATCC 39315 / El Tor Inaba N16961)).